The primary structure comprises 221 residues: MKKEKAVVVFSGGQDSTTCLFWAKKHFAEVEAVTFDYNQRHRLEIDVAASIAKELNVSHTVLDMSLLHQLAPNALTRSDIAIEQKEGQLPSTFVDGRNLLFLSFAAVLAKQKGARHLVTGVCETDFSGYPDCRDVFIKSLNVTLNLAMDYQFVIHTPLMWLNKAETWKLADELGALEFVRNKTLTCYNGIIADGCGECPACVLRKRGLDQYMNEKKGANVR.

Position 10 to 20 (10 to 20 (FSGGQDSTTCL)) interacts with ATP. Positions 186, 195, 198, and 201 each coordinate Zn(2+).

This sequence belongs to the QueC family. In terms of assembly, homodimer. Zn(2+) serves as cofactor.

The catalysed reaction is 7-carboxy-7-deazaguanine + NH4(+) + ATP = 7-cyano-7-deazaguanine + ADP + phosphate + H2O + H(+). Its pathway is purine metabolism; 7-cyano-7-deazaguanine biosynthesis. In terms of biological role, catalyzes the ATP-dependent conversion of 7-carboxy-7-deazaguanine (CDG) to 7-cyano-7-deazaguanine (preQ(0)). The protein is 7-cyano-7-deazaguanine synthase of Anoxybacillus flavithermus (strain DSM 21510 / WK1).